A 380-amino-acid polypeptide reads, in one-letter code: Ribosomal RNA large subunit methyltransferase F (380 aa).

Residues M1–K32 are disordered.

The protein belongs to the methyltransferase superfamily. METTL16/RlmF family.

Its subcellular location is the cytoplasm. It catalyses the reaction adenosine(1618) in 23S rRNA + S-adenosyl-L-methionine = N(6)-methyladenosine(1618) in 23S rRNA + S-adenosyl-L-homocysteine + H(+). Functionally, specifically methylates the adenine in position 1618 of 23S rRNA. This chain is Ribosomal RNA large subunit methyltransferase F, found in Shewanella halifaxensis (strain HAW-EB4).